The primary structure comprises 177 residues: MSIENLKSALPAYAKDQKLNIGSLTRSTELNEEQLWGSLVAAAAATRNDLVLSEILEEAREHLSEEAVDAALGSATVMAMNNVAYRAKSWLGDDFAQVKFGLRMNIIAKPGVDKATFELWSTVVSAINGCEHCLSAHANTLLEEGVTKEQIWEGIKVAGVVEAVAQALQAEAVRSAE.

Cysteine 130 acts as the Proton donor in catalysis. An intrachain disulfide couples cysteine 130 to cysteine 133. Cysteine 133 acts as the Cysteine sulfenic acid (-SOH) intermediate in catalysis.

Belongs to the AhpD family. As to quaternary structure, homotrimer.

The catalysed reaction is N(6)-[(R)-dihydrolipoyl]-L-lysyl-[lipoyl-carrier protein] + a hydroperoxide = N(6)-[(R)-lipoyl]-L-lysyl-[lipoyl-carrier protein] + an alcohol + H2O. In terms of biological role, antioxidant protein with alkyl hydroperoxidase activity. Required for the reduction of the AhpC active site cysteine residues and for the regeneration of the AhpC enzyme activity. The chain is Alkyl hydroperoxide reductase AhpD from Corynebacterium aurimucosum (strain ATCC 700975 / DSM 44827 / CIP 107346 / CN-1) (Corynebacterium nigricans).